The chain runs to 279 residues: Large ribosomal subunit protein uL2 (279 aa).

The segment at 223 to 279 (VAMNPVDHPMGGGEGRSSGGHPRSRKGLYAKGGKTRSANKYSKNMIVKKRVNKRLSK) is disordered. Positions 268–279 (IVKKRVNKRLSK) are enriched in basic residues.

It belongs to the universal ribosomal protein uL2 family. In terms of assembly, part of the 50S ribosomal subunit. Forms a bridge to the 30S subunit in the 70S ribosome.

One of the primary rRNA binding proteins. Required for association of the 30S and 50S subunits to form the 70S ribosome, for tRNA binding and peptide bond formation. It has been suggested to have peptidyltransferase activity; this is somewhat controversial. Makes several contacts with the 16S rRNA in the 70S ribosome. The polypeptide is Large ribosomal subunit protein uL2 (Cytophaga hutchinsonii (strain ATCC 33406 / DSM 1761 / CIP 103989 / NBRC 15051 / NCIMB 9469 / D465)).